The following is a 434-amino-acid chain: Beta-enolase (434 aa).

Alanine 2 carries the N-acetylalanine modification. Threonine 72 carries the post-translational modification Phosphothreonine. Phosphoserine is present on residues serine 83 and serine 157. Substrate-binding residues include histidine 158 and glutamate 167. Phosphoserine is present on serine 176. Phosphothreonine is present on threonine 205. Glutamate 210 acts as the Proton donor in catalysis. Residue threonine 229 is modified to Phosphothreonine. At tyrosine 236 the chain carries Phosphotyrosine. Residue aspartate 245 participates in Mg(2+) binding. Residue serine 263 is modified to Phosphoserine. 2 residues coordinate substrate: glutamate 293 and aspartate 318. Residues glutamate 293 and aspartate 318 each contribute to the Mg(2+) site. Lysine 343 serves as the catalytic Proton acceptor. Substrate-binding positions include 370-373 (SHRS) and lysine 394.

This sequence belongs to the enolase family. As to quaternary structure, mammalian enolase is composed of 3 isozyme subunits, alpha, beta and gamma, which can form homodimers or heterodimers which are cell-type and development-specific. Interacts with PNKD. Mg(2+) is required as a cofactor. In terms of tissue distribution, the alpha/alpha homodimer is expressed in embryo and in most adult tissues. The alpha/beta heterodimer and the beta/beta homodimer are found in striated muscle, and the alpha/gamma heterodimer and the gamma/gamma homodimer in neurons.

The protein resides in the cytoplasm. It catalyses the reaction (2R)-2-phosphoglycerate = phosphoenolpyruvate + H2O. It participates in carbohydrate degradation; glycolysis; pyruvate from D-glyceraldehyde 3-phosphate: step 4/5. Glycolytic enzyme that catalyzes the conversion of 2-phosphoglycerate to phosphoenolpyruvate. Appears to have a function in striated muscle development and regeneration. This Homo sapiens (Human) protein is Beta-enolase (ENO3).